The following is a 238-amino-acid chain: Leucine-rich repeat-containing protein 57 (238 aa).

8 LRR repeats span residues 39-60, 62-84, 85-106, 108-129, 131-152, 153-175, 176-196, and 201-221; these read NLRTIDLSSNKIEVVPPMMGKF, LLKSLSLNNNRISRLPDELCKLK, KLETLHLNGNQISQLPADFVQL, ALKTLNLSGNRLKTLPAQLFKL, NLDVVDLSKNRIQAIPDEVSGL, QAIELNLNQNQISQISVNISHCP, RLKVLRLEENCLELSMLPPSI, and QISLLAVEGNLFEIKKLRDLE.

The chain is Leucine-rich repeat-containing protein 57 (lrrc57) from Xenopus laevis (African clawed frog).